Reading from the N-terminus, the 201-residue chain is Retinol binding protein 4 (201 aa).

Positions 1-18 are cleaved as a signal peptide; sequence MAWVWALVLLAALGSARA. 3 disulfides stabilise this stretch: Cys-22/Cys-178, Cys-88/Cys-192, and Cys-138/Cys-147. Gln-116 is a substrate binding site. Arg-139 is modified (omega-N-methylarginine).

This sequence belongs to the calycin superfamily. Lipocalin family. Interacts with TTR. Interaction with TTR prevents its loss by filtration through the kidney glomeruli. Interacts with STRA6. As to expression, highly expressed in liver. Also expressed in adipose tissue. Expressed by endometrium from days 16-25 and by unattached chorioallantois from days 30-36 during pregnancy.

Its subcellular location is the secreted. Its function is as follows. Retinol-binding protein that mediates retinol transport in blood plasma. Delivers retinol from the liver stores to the peripheral tissues. Transfers the bound all-trans retinol to STRA6, that then facilitates retinol transport across the cell membrane. The chain is Retinol binding protein 4 from Felis catus (Cat).